Here is a 620-residue protein sequence, read N- to C-terminus: uncharacterized protein (620 aa).

The Radical SAM core domain maps to 324 to 586; sequence RRYVTIAIIK…HPWEKGIYPT (263 aa). The [4Fe-4S] cluster site is built by Cys-338, Cys-342, and Cys-345. Lys-552 carries the post-translational modification N6-(pyridoxal phosphate)lysine.

It belongs to the radical SAM superfamily. KamA family. Requires [4Fe-4S] cluster as cofactor. Pyridoxal 5'-phosphate serves as cofactor.

This is an uncharacterized protein from Methanocaldococcus jannaschii (strain ATCC 43067 / DSM 2661 / JAL-1 / JCM 10045 / NBRC 100440) (Methanococcus jannaschii).